A 208-amino-acid polypeptide reads, in one-letter code: Thymidylate kinase (208 aa).

9–16 (GGEGCGKS) contacts ATP.

Belongs to the thymidylate kinase family.

The enzyme catalyses dTMP + ATP = dTDP + ADP. Its function is as follows. Phosphorylation of dTMP to form dTDP in both de novo and salvage pathways of dTTP synthesis. The polypeptide is Thymidylate kinase (Dehalococcoides mccartyi (strain CBDB1)).